The primary structure comprises 215 residues: Outer-membrane lipoprotein carrier protein (215 aa).

The signal sequence occupies residues 1–24 (MFVLKARHLMAAGLVSLAAWSAGA).

Belongs to the LolA family. Monomer.

Its subcellular location is the periplasm. Functionally, participates in the translocation of lipoproteins from the inner membrane to the outer membrane. Only forms a complex with a lipoprotein if the residue after the N-terminal Cys is not an aspartate (The Asp acts as a targeting signal to indicate that the lipoprotein should stay in the inner membrane). This is Outer-membrane lipoprotein carrier protein from Ralstonia nicotianae (strain ATCC BAA-1114 / GMI1000) (Ralstonia solanacearum).